A 614-amino-acid chain; its full sequence is Maltose permease MAL31 (614 aa).

The tract at residues 1-48 is disordered; it reads MKGLSSLINRKKDRNDSHLDEIENGVNATEFNSIEMEEQGKKSDFDLS. The Cytoplasmic segment spans residues 1-108; sequence MKGLSSLINR…AAAWSLLVST (108 aa). Over residues 38–48 the composition is skewed to basic and acidic residues; the sequence is EQGKKSDFDLS. A helical membrane pass occupies residues 109-129; that stretch reads TLIQEGYDTAILGAFYALPVF. Residues 130–144 lie on the Extracellular side of the membrane; the sequence is QKKYGSLNSNTGDYE. Residues 145–165 traverse the membrane as a helical segment; the sequence is ISVSWQIGLCLCYMAGEIVGL. Topologically, residues 166 to 180 are cytoplasmic; sequence QMTGPSVDYMGNRYT. A helical transmembrane segment spans residues 181 to 201; sequence LIMALFFLAAFIFILYFCKSL. Gly-202 is a topological domain (extracellular). Residues 203–223 form a helical membrane-spanning segment; that stretch reads MIAVGQALCGMPWGCFQCLTV. At 224–236 the chain is on the cytoplasmic side; sequence SYASEICPLALRY. A helical transmembrane segment spans residues 237–257; that stretch reads YLTTYSNLCWAFGQLFAAGIM. The Extracellular segment spans residues 258 to 272; that stretch reads KNSQNKYANSELGYK. The chain crosses the membrane as a helical span at residues 273 to 293; that stretch reads LPFALQWIWPLPLAVGIFFAP. Topologically, residues 294–364 are cytoplasmic; sequence ESPWWLVKKG…KDGINRRRTR (71 aa). The chain crosses the membrane as a helical span at residues 365–385; it reads IACLCWIGQCSCGASLIGYST. The Extracellular segment spans residues 386–398; the sequence is YFYEKAGVSTDTA. A helical transmembrane segment spans residues 399–419; it reads FTFSIIQYCLGIAATFISWWA. Residues 420 to 427 are Cytoplasmic-facing; the sequence is SKYCGRFD. Residues 428-448 traverse the membrane as a helical segment; it reads LYAFGLAFQAIMFFIIGGLGC. The Extracellular portion of the chain corresponds to 449–460; the sequence is SDTHGAKMGSGA. Residues 461–481 form a helical membrane-spanning segment; the sequence is LLMVVAFFYNLGIAPVVFCLV. Residues 482–493 are Cytoplasmic-facing; the sequence is SEIPSSRLRTKT. The helical transmembrane segment at 494–514 threads the bilayer; it reads IILARNAYNVIQVVVTVLIMY. Over 515–526 the chain is Extracellular; sequence QLNSEKWNWGAK. The chain crosses the membrane as a helical span at residues 527 to 547; sequence SGFFWGGFCLATLAWAVVDLP. The Cytoplasmic segment spans residues 548–614; that stretch reads ETAGRTFIEI…GRNTSSVVNK (67 aa). A disordered region spans residues 595 to 614; the sequence is EDLETSVVDEGRNTSSVVNK.

It belongs to the major facilitator superfamily. Sugar transporter (TC 2.A.1.1) family.

The protein localises to the membrane. High-affinity uptake of maltose and maltotriose. Also transports turanose but not alpha-methylglucoside, melezitose or trehalose. The polypeptide is Maltose permease MAL31 (MAL31) (Saccharomyces cerevisiae (strain ATCC 204508 / S288c) (Baker's yeast)).